We begin with the raw amino-acid sequence, 370 residues long: Cytochrome b (370 aa).

Transmembrane regions (helical) follow at residues 25-45 (FGSM…FLAV), 69-90 (WLMQ…YIHI), 105-125 (WLSG…GYVL), and 170-190 (FFAL…LHIL). Heme b contacts are provided by histidine 75 and histidine 89. 2 residues coordinate heme b: histidine 174 and histidine 188. Residue histidine 193 participates in a ubiquinone binding. 4 helical membrane passes run 218–238 (YKDL…VSFF), 280–300 (LGGA…PFTH), 312–332 (LMQL…WSST), and 339–358 (FTTI…ISKP).

The protein belongs to the cytochrome b family. The cytochrome bc1 complex contains 3 respiratory subunits (MT-CYB, CYC1 and UQCRFS1), 2 core proteins (UQCRC1 and UQCRC2) and probably 6 low-molecular weight proteins. Heme b serves as cofactor.

Its subcellular location is the mitochondrion inner membrane. In terms of biological role, component of the ubiquinol-cytochrome c reductase complex (complex III or cytochrome b-c1 complex) that is part of the mitochondrial respiratory chain. The b-c1 complex mediates electron transfer from ubiquinol to cytochrome c. Contributes to the generation of a proton gradient across the mitochondrial membrane that is then used for ATP synthesis. The protein is Cytochrome b (MT-CYB) of Chilabothrus subflavus (Jamaican yellow boa).